The sequence spans 365 residues: MFEVNPVKFKIKDLADRTLLLRGIFDYDAKKERLEEVSAELESSEVWNNPENAQALGKERSALELVVKTIDDMDSGLEDVEGLVELAVEEEDEETFADASSELDALEKRLEELEFRRMFSGPHDISDCYLDIQSGSGGTEAQDWANMVLRMFLRWGEAHDYKPELIEVTDGDVAGIKGATIKFTGEYAFGSLRTETGVHRLVRKSPFDSSGKRHTSFCSVFVYPEIDDSIEIDINPSDLRIDTYRASGAGGQHVNKTESAIRITHVPTNTVVQCQNDRSQHKNRDAAMKQLKAKLYELEMLKQNADKQQAEDAKSDIGWGSQIRSYVLDDARIKDLRTGVESRNTQSVLDGDLDKFIEASLKSGL.

Q252 is subject to N5-methylglutamine.

Belongs to the prokaryotic/mitochondrial release factor family. Post-translationally, methylated by PrmC. Methylation increases the termination efficiency of RF2.

The protein resides in the cytoplasm. Functionally, peptide chain release factor 2 directs the termination of translation in response to the peptide chain termination codons UGA and UAA. The sequence is that of Peptide chain release factor 2 from Shewanella woodyi (strain ATCC 51908 / MS32).